We begin with the raw amino-acid sequence, 476 residues long: NADH-quinone oxidoreductase subunit N (476 aa).

14 helical membrane passes run 10–30, 42–62, 77–97, 108–128, 129–149, 162–182, 202–222, 234–254, 268–288, 296–316, 323–343, 368–388, 392–412, and 445–465; these read AVLP…IGAI, LAIA…AVTI, FMKV…VDWL, AVLV…GDLI, ALYL…AINR, FVLG…IYGF, LVFG…AVPF, PTPV…AVFV, WQQI…FAAI, LLAY…AAGT, VLLY…CVLA, ALAL…AGFV, YVFL…GVVA, and AVLA…TPLI.

This sequence belongs to the complex I subunit 2 family. NDH-1 is composed of 14 different subunits. Subunits NuoA, H, J, K, L, M, N constitute the membrane sector of the complex.

It localises to the cell inner membrane. It catalyses the reaction a quinone + NADH + 5 H(+)(in) = a quinol + NAD(+) + 4 H(+)(out). NDH-1 shuttles electrons from NADH, via FMN and iron-sulfur (Fe-S) centers, to quinones in the respiratory chain. The immediate electron acceptor for the enzyme in this species is believed to be ubiquinone. Couples the redox reaction to proton translocation (for every two electrons transferred, four hydrogen ions are translocated across the cytoplasmic membrane), and thus conserves the redox energy in a proton gradient. The sequence is that of NADH-quinone oxidoreductase subunit N from Azorhizobium caulinodans (strain ATCC 43989 / DSM 5975 / JCM 20966 / LMG 6465 / NBRC 14845 / NCIMB 13405 / ORS 571).